A 418-amino-acid chain; its full sequence is Histidine--tRNA ligase (418 aa).

Belongs to the class-II aminoacyl-tRNA synthetase family. In terms of assembly, homodimer.

It localises to the cytoplasm. It carries out the reaction tRNA(His) + L-histidine + ATP = L-histidyl-tRNA(His) + AMP + diphosphate + H(+). This is Histidine--tRNA ligase from Dehalococcoides mccartyi (strain ATCC BAA-2100 / JCM 16839 / KCTC 5957 / BAV1).